Consider the following 423-residue polypeptide: 5-hydroxytryptamine receptor 1A-alpha (423 aa).

Over methionine 1–isoleucine 47 the chain is Extracellular. N-linked (GlcNAc...) asparagine glycosylation is found at asparagine 9, asparagine 12, and asparagine 30. Residues threonine 48–alanine 68 form a helical membrane-spanning segment. Topologically, residues alanine 69–tyrosine 82 are cytoplasmic. A helical transmembrane segment spans residues leucine 83–valine 107. At leucine 108–aspartate 116 the chain is on the extracellular side. The helical transmembrane segment at isoleucine 117–leucine 141 threads the bilayer. Cysteine 118 and cysteine 196 form a disulfide bridge. Residues aspartate 125 and cysteine 129 each contribute to the serotonin site. A DRY motif; important for ligand-induced conformation changes motif is present at residues aspartate 142–tyrosine 144. Residues aspartate 142 to arginine 161 lie on the Cytoplasmic side of the membrane. Residues alanine 162–glycine 183 form a helical membrane-spanning segment. The Extracellular segment spans residues tryptophan 184–proline 202. Residues glycine 203–glycine 225 form a helical membrane-spanning segment. The Cytoplasmic portion of the chain corresponds to arginine 226–threonine 347. Residues leucine 311 to threonine 332 form a disordered region. Residues threonine 316–threonine 329 are compositionally biased toward polar residues. 1D-myo-inositol 4-phosphate is bound by residues serine 320, lysine 346, threonine 347, and glycine 353. Residues leucine 348 to phenylalanine 371 traverse the membrane as a helical segment. Topologically, residues cysteine 372 to proline 379 are extracellular. Residues glutamate 380 to phenylalanine 404 traverse the membrane as a helical segment. The short motif at asparagine 397 to tyrosine 401 is the NPxxY motif; important for ligand-induced conformation changes and signaling element. The 1D-myo-inositol 4-phosphate site is built by phenylalanine 404, asparagine 405, and lysine 406. Residues asparagine 405 to histidine 423 are Cytoplasmic-facing.

The protein belongs to the G-protein coupled receptor 1 family. 5-hydroxytryptamine receptor subfamily.

The protein localises to the cell membrane. Its activity is regulated as follows. G-protein coupled receptor activity is regulated by lipids: phosphatidylinositol 4-phosphate increases HTR1A-mediated activity. Functionally, G-protein coupled receptor for 5-hydroxytryptamine (serotonin). Also functions as a receptor for various drugs and psychoactive substances. Ligand binding causes a conformation change that triggers signaling via guanine nucleotide-binding proteins (G proteins) and modulates the activity of downstream effectors, such as adenylate cyclase. HTR1A is coupled to G(i)/G(o) G alpha proteins and mediates inhibitory neurotransmission: signaling inhibits adenylate cyclase activity and activates a phosphatidylinositol-calcium second messenger system that regulates the release of Ca(2+) ions from intracellular stores. Beta-arrestin family members regulate signaling by mediating both receptor desensitization and resensitization processes. This chain is 5-hydroxytryptamine receptor 1A-alpha (htr1aa), found in Takifugu rubripes (Japanese pufferfish).